We begin with the raw amino-acid sequence, 431 residues long: Xaa-Arg dipeptidase (431 aa).

Belongs to the peptidase M20A family.

The catalysed reaction is beta-alanyl-L-lysine + H2O = beta-alanine + L-lysine. It catalyses the reaction beta-alanyl-L-arginine + H2O = beta-alanine + L-arginine. It carries out the reaction beta-alanyl-L-ornithine + H2O = beta-alanine + L-ornithine. The enzyme catalyses N(2)-(4-aminobutanoyl)-L-lysine + H2O = 4-aminobutanoate + L-lysine. The catalysed reaction is N(2)-(4-aminobutanoyl)-L-arginine + H2O = 4-aminobutanoate + L-arginine. It catalyses the reaction N(2)-(4-aminobutanoyl)-L-ornithine + H2O = 4-aminobutanoate + L-ornithine. In terms of biological role, catalyzes the peptide bond hydrolysis in dipeptides having basic amino acids lysine, ornithine or arginine at C-terminus. Postulated to function in a metabolite repair mechanism by eliminating alternate dipeptide by-products formed during carnosine synthesis. In Mus musculus (Mouse), this protein is Xaa-Arg dipeptidase.